A 296-amino-acid chain; its full sequence is Small ribosomal subunit protein uS2 (296 aa).

Positions 246 to 272 (QAKDGSVVDSGKGKSIAAHKGGGKASK) are disordered.

This sequence belongs to the universal ribosomal protein uS2 family.

The sequence is that of Small ribosomal subunit protein uS2 from Anaplasma phagocytophilum (strain HZ).